A 96-amino-acid chain; its full sequence is Putative pterin-4-alpha-carbinolamine dehydratase (96 aa).

The protein belongs to the pterin-4-alpha-carbinolamine dehydratase family.

The catalysed reaction is (4aS,6R)-4a-hydroxy-L-erythro-5,6,7,8-tetrahydrobiopterin = (6R)-L-erythro-6,7-dihydrobiopterin + H2O. This chain is Putative pterin-4-alpha-carbinolamine dehydratase, found in Herpetosiphon aurantiacus (strain ATCC 23779 / DSM 785 / 114-95).